Here is a 107-residue protein sequence, read N- to C-terminus: Pyrimidine/purine nucleoside phosphorylase (107 aa).

Belongs to the nucleoside phosphorylase PpnP family.

It catalyses the reaction a purine D-ribonucleoside + phosphate = a purine nucleobase + alpha-D-ribose 1-phosphate. The catalysed reaction is adenosine + phosphate = alpha-D-ribose 1-phosphate + adenine. The enzyme catalyses cytidine + phosphate = cytosine + alpha-D-ribose 1-phosphate. It carries out the reaction guanosine + phosphate = alpha-D-ribose 1-phosphate + guanine. It catalyses the reaction inosine + phosphate = alpha-D-ribose 1-phosphate + hypoxanthine. The catalysed reaction is thymidine + phosphate = 2-deoxy-alpha-D-ribose 1-phosphate + thymine. The enzyme catalyses uridine + phosphate = alpha-D-ribose 1-phosphate + uracil. It carries out the reaction xanthosine + phosphate = alpha-D-ribose 1-phosphate + xanthine. Functionally, catalyzes the phosphorolysis of diverse nucleosides, yielding D-ribose 1-phosphate and the respective free bases. Can use uridine, adenosine, guanosine, cytidine, thymidine, inosine and xanthosine as substrates. Also catalyzes the reverse reactions. This Aromatoleum aromaticum (strain DSM 19018 / LMG 30748 / EbN1) (Azoarcus sp. (strain EbN1)) protein is Pyrimidine/purine nucleoside phosphorylase.